The primary structure comprises 99 residues: Aspartyl/glutamyl-tRNA(Asn/Gln) amidotransferase subunit C (99 aa).

This sequence belongs to the GatC family. As to quaternary structure, heterotrimer of A, B and C subunits.

It catalyses the reaction L-glutamyl-tRNA(Gln) + L-glutamine + ATP + H2O = L-glutaminyl-tRNA(Gln) + L-glutamate + ADP + phosphate + H(+). The catalysed reaction is L-aspartyl-tRNA(Asn) + L-glutamine + ATP + H2O = L-asparaginyl-tRNA(Asn) + L-glutamate + ADP + phosphate + 2 H(+). Allows the formation of correctly charged Asn-tRNA(Asn) or Gln-tRNA(Gln) through the transamidation of misacylated Asp-tRNA(Asn) or Glu-tRNA(Gln) in organisms which lack either or both of asparaginyl-tRNA or glutaminyl-tRNA synthetases. The reaction takes place in the presence of glutamine and ATP through an activated phospho-Asp-tRNA(Asn) or phospho-Glu-tRNA(Gln). This is Aspartyl/glutamyl-tRNA(Asn/Gln) amidotransferase subunit C from Burkholderia lata (strain ATCC 17760 / DSM 23089 / LMG 22485 / NCIMB 9086 / R18194 / 383).